The primary structure comprises 863 residues: Envelope glycoprotein gp160 (863 aa).

The N-terminal stretch at 1–31 (MRVMGIRMNYQHLWKWGIMLLGILMTCSVAE) is a signal peptide. The Extracellular portion of the chain corresponds to 32-691 (DLWVTVYYGV…ITKWLWYIKI (660 aa)). A disulfide bridge links C53 with C73. 15 N-linked (GlcNAc...) asparagine; by host glycosylation sites follow: N87, N129, N136, N142, N143, N159, N163, N194, N199, N209, N246, N274, N288, N301, and N307. Cystine bridges form between C118–C217, C125–C208, C130–C160, C230–C259, and C240–C251. The interval 130 to 159 (CTNAGGNKTTNGNNTTNQEEQMMEKGEMKN) is V1. The V2 stretch occupies residues 160–208 (CSFNITTVISDKKKQVHALFYRLDVVPIDDDNSANTSNTNYTNYRLINC). The interval 308–341 (CTRPDNKITRQSTPIGLGQALYTTRIKGDIRQAY) is V3. Cysteines 308 and 342 form a disulfide. Residues N343, N350, and N365 are each glycosylated (N-linked (GlcNAc...) asparagine; by host). Positions 374 to 384 (PAGGDPEITTH) are CD4-binding loop. Intrachain disulfides connect C388/C452 and C395/C425. The segment at 395 to 425 (CNTSRLFNSTWNSSTWNNDTLNSEGTIKLPC) is V4. N-linked (GlcNAc...) asparagine; by host glycosylation is found at N396, N402, N406, N412, N455, N468, N469, and N472. V5 regions lie at residues 467 to 478 (VNNSTNETFRPG) and 470 to 478 (STNETFRPG). The segment at 519–539 (AIGLGAVFLGFLGAAGSTMGA) is fusion peptide. Residues 581 to 599 (KQLQARVLAVESYLKDQQL) are immunosuppression. C605 and C611 are oxidised to a cystine. Residues N618, N623, N632, and N644 are each glycosylated (N-linked (GlcNAc...) asparagine; by host). A coiled-coil region spans residues 640-674 (REIDNYTGVIYSLIENSQIQQEKNEQDLLQLDKWA). The segment at 669 to 690 (QLDKWASLWNWFSITKWLWYIK) is MPER; binding to GalCer. Residues 692–712 (FIMIVGGLIGLRIVFTVLSLV) traverse the membrane as a helical segment. Topologically, residues 713 to 863 (NRVRQGYSPL…VRQGLERALL (151 aa)) are cytoplasmic. A YXXL motif; contains endocytosis signal motif is present at residues 719–722 (YSPL). The tract at residues 729-748 (PAPRGPDRPEGIEEEGGEQG) is disordered. C771 carries S-palmitoyl cysteine; by host lipidation. The Di-leucine internalization motif signature appears at 862–863 (LL).

The protein belongs to the HIV-1 env protein family. The mature envelope protein (Env) consists of a homotrimer of non-covalently associated gp120-gp41 heterodimers. The resulting complex protrudes from the virus surface as a spike. There seems to be as few as 10 spikes on the average virion. Interacts with host CD4, CCR5 and CXCR4. Gp120 also interacts with the C-type lectins CD209/DC-SIGN and CLEC4M/DC-SIGNR (collectively referred to as DC-SIGN(R)). Gp120 and gp41 interact with GalCer. Gp120 interacts with host ITGA4/ITGB7 complex; on CD4+ T-cells, this interaction results in rapid activation of integrin ITGAL/LFA-1, which facilitates efficient cell-to-cell spreading of HIV-1. Gp120 interacts with cell-associated heparan sulfate; this interaction increases virus infectivity on permissive cells and may be involved in infection of CD4- cells. As to quaternary structure, the mature envelope protein (Env) consists of a homotrimer of non-covalently associated gp120-gp41 heterodimers. The resulting complex protrudes from the virus surface as a spike. There seems to be as few as 10 spikes on the average virion. Highly glycosylated by host. The high number of glycan on the protein is reffered to as 'glycan shield' because it contributes to hide protein sequence from adaptive immune system. Post-translationally, palmitoylation of the transmembrane protein and of Env polyprotein (prior to its proteolytic cleavage) is essential for their association with host cell membrane lipid rafts. Palmitoylation is therefore required for envelope trafficking to classical lipid rafts, but not for viral replication. In terms of processing, specific enzymatic cleavages in vivo yield mature proteins. Envelope glycoproteins are synthesized as an inactive precursor that is heavily N-glycosylated and processed likely by host cell furin in the Golgi to yield the mature SU and TM proteins. The cleavage site between SU and TM requires the minimal sequence [KR]-X-[KR]-R. About 2 of the 9 disulfide bonds of gp41 are reduced by P4HB/PDI, following binding to CD4 receptor.

It localises to the virion membrane. The protein localises to the host cell membrane. The protein resides in the host endosome membrane. Its function is as follows. Oligomerizes in the host endoplasmic reticulum into predominantly trimers. In a second time, gp160 transits in the host Golgi, where glycosylation is completed. The precursor is then proteolytically cleaved in the trans-Golgi and thereby activated by cellular furin or furin-like proteases to produce gp120 and gp41. Attaches the virus to the host lymphoid cell by binding to the primary receptor CD4. This interaction induces a structural rearrangement creating a high affinity binding site for a chemokine coreceptor like CXCR4 and/or CCR5. Acts as a ligand for CD209/DC-SIGN and CLEC4M/DC-SIGNR, which are respectively found on dendritic cells (DCs), and on endothelial cells of liver sinusoids and lymph node sinuses. These interactions allow capture of viral particles at mucosal surfaces by these cells and subsequent transmission to permissive cells. HIV subverts the migration properties of dendritic cells to gain access to CD4+ T-cells in lymph nodes. Virus transmission to permissive T-cells occurs either in trans (without DCs infection, through viral capture and transmission), or in cis (following DCs productive infection, through the usual CD4-gp120 interaction), thereby inducing a robust infection. In trans infection, bound virions remain infectious over days and it is proposed that they are not degraded, but protected in non-lysosomal acidic organelles within the DCs close to the cell membrane thus contributing to the viral infectious potential during DCs' migration from the periphery to the lymphoid tissues. On arrival at lymphoid tissues, intact virions recycle back to DCs' cell surface allowing virus transmission to CD4+ T-cells. Functionally, acts as a class I viral fusion protein. Under the current model, the protein has at least 3 conformational states: pre-fusion native state, pre-hairpin intermediate state, and post-fusion hairpin state. During fusion of viral and target intracellular membranes, the coiled coil regions (heptad repeats) assume a trimer-of-hairpins structure, positioning the fusion peptide in close proximity to the C-terminal region of the ectodomain. The formation of this structure appears to drive apposition and subsequent fusion of viral and target cell membranes. Complete fusion occurs in host cell endosomes and is dynamin-dependent, however some lipid transfer might occur at the plasma membrane. The virus undergoes clathrin-dependent internalization long before endosomal fusion, thus minimizing the surface exposure of conserved viral epitopes during fusion and reducing the efficacy of inhibitors targeting these epitopes. Membranes fusion leads to delivery of the nucleocapsid into the cytoplasm. This is Envelope glycoprotein gp160 from Human immunodeficiency virus type 1 group M subtype D (isolate Z84) (HIV-1).